A 379-amino-acid chain; its full sequence is Homoserine O-succinyltransferase (379 aa).

The AB hydrolase-1 domain maps to 51-360; sequence NAVLICHALS…DAPQGHDAFL (310 aa). The Nucleophile role is filled by Ser-157. Arg-227 contacts substrate. Active-site residues include Asp-323 and His-356. Asp-357 contributes to the substrate binding site.

It belongs to the AB hydrolase superfamily. MetX family. Homodimer.

The protein resides in the cytoplasm. It catalyses the reaction L-homoserine + succinyl-CoA = O-succinyl-L-homoserine + CoA. The protein operates within amino-acid biosynthesis; L-methionine biosynthesis via de novo pathway; O-succinyl-L-homoserine from L-homoserine: step 1/1. Functionally, transfers a succinyl group from succinyl-CoA to L-homoserine, forming succinyl-L-homoserine. This is Homoserine O-succinyltransferase from Pseudomonas aeruginosa (strain LESB58).